We begin with the raw amino-acid sequence, 831 residues long: Prickle-like protein 1 (831 aa).

In terms of domain architecture, PET spans 14–122 (FGCQRSSTSD…TIKLLSRAVM (109 aa)). 3 LIM zinc-binding domains span residues 124-189 (AVCE…LLKP), 189-249 (PRCS…LYAE), and 249-313 (EYCE…EDVH). Positions 313 to 342 (HASDSSDSAFQSARSRDSRRSVRMGKSSRS) are disordered. Serine 315, serine 591, and serine 594 each carry phosphoserine. Disordered stretches follow at residues 663-688 (FEERGSRSHHHRRRRSRKSRSDNALN) and 763-831 (CSSS…CIIS). Residues 669-680 (RSHHHRRRRSRK) show a composition bias toward basic residues. Serine 683 is modified (phosphoserine). Positions 815–831 (TKSKKKKGHKGKNCIIS) are enriched in basic residues. Residue cysteine 828 is modified to Cysteine methyl ester. Residue cysteine 828 is the site of S-farnesyl cysteine attachment. Residues 829 to 831 (IIS) constitute a propeptide, removed in mature form.

It belongs to the prickle / espinas / testin family. Interacts with REST. As to expression, expressed at highest levels in placenta and at lower levels in lung, liver, kidney and pancreas. Expressed in thalamus, hippocampus, cerebral cortex, and cerebellum (in neurons rather than glia).

The protein localises to the nucleus membrane. The protein resides in the cytoplasm. It localises to the cytosol. Functionally, involved in the planar cell polarity pathway that controls convergent extension during gastrulation and neural tube closure. Convergent extension is a complex morphogenetic process during which cells elongate, move mediolaterally, and intercalate between neighboring cells, leading to convergence toward the mediolateral axis and extension along the anteroposterior axis. Necessary for nuclear localization of REST. May serve as nuclear receptor. This is Prickle-like protein 1 (PRICKLE1) from Homo sapiens (Human).